Consider the following 378-residue polypeptide: Glutamate 5-kinase (378 aa).

Lys-19 contacts ATP. 3 residues coordinate substrate: Ser-59, Asp-146, and Asn-158. 178 to 179 lines the ATP pocket; that stretch reads TD. In terms of domain architecture, PUA spans 285–363; the sequence is RGSVTVDPGA…SEFEKLLGYT (79 aa).

The protein belongs to the glutamate 5-kinase family.

The protein localises to the cytoplasm. The enzyme catalyses L-glutamate + ATP = L-glutamyl 5-phosphate + ADP. The protein operates within amino-acid biosynthesis; L-proline biosynthesis; L-glutamate 5-semialdehyde from L-glutamate: step 1/2. Functionally, catalyzes the transfer of a phosphate group to glutamate to form L-glutamate 5-phosphate. This Polaromonas naphthalenivorans (strain CJ2) protein is Glutamate 5-kinase.